The chain runs to 263 residues: Protein phosphatase type 2A regulatory subunit RTS3 (263 aa).

Disordered regions lie at residues 1–62 (MIAT…AQRR) and 149–176 (LPLTPKDSMTHISHSARRSSRNASISNG). Positions 46 to 61 (LSTSSSPSSSPMSAQR) are enriched in low complexity. Ser-172, Ser-192, Ser-214, and Ser-238 each carry phosphoserine.

The protein resides in the cytoplasm. It localises to the nucleus. In terms of biological role, may be a component of a protein phosphatase type 2A (PP2A) complex. Negatively regulates SIT4 phosphatase, a modulators of caffeine sensitivity. The polypeptide is Protein phosphatase type 2A regulatory subunit RTS3 (RTS3) (Saccharomyces cerevisiae (strain ATCC 204508 / S288c) (Baker's yeast)).